The following is a 399-amino-acid chain: Dual-specificity RNA methyltransferase RlmN (399 aa).

The Proton acceptor role is filled by glutamate 122. Residues 128–371 enclose the Radical SAM core domain; that stretch reads ETDRGTLCVS…VRTPRGRDIL (244 aa). A disulfide bridge connects residues cysteine 135 and cysteine 374. [4Fe-4S] cluster is bound by residues cysteine 142, cysteine 146, and cysteine 149. Residues 200–201, serine 232, 254–256, and asparagine 331 contribute to the S-adenosyl-L-methionine site; these read GE and SLH. Catalysis depends on cysteine 374, which acts as the S-methylcysteine intermediate.

Belongs to the radical SAM superfamily. RlmN family. [4Fe-4S] cluster serves as cofactor.

It is found in the cytoplasm. It catalyses the reaction adenosine(2503) in 23S rRNA + 2 reduced [2Fe-2S]-[ferredoxin] + 2 S-adenosyl-L-methionine = 2-methyladenosine(2503) in 23S rRNA + 5'-deoxyadenosine + L-methionine + 2 oxidized [2Fe-2S]-[ferredoxin] + S-adenosyl-L-homocysteine. It carries out the reaction adenosine(37) in tRNA + 2 reduced [2Fe-2S]-[ferredoxin] + 2 S-adenosyl-L-methionine = 2-methyladenosine(37) in tRNA + 5'-deoxyadenosine + L-methionine + 2 oxidized [2Fe-2S]-[ferredoxin] + S-adenosyl-L-homocysteine. In terms of biological role, specifically methylates position 2 of adenine 2503 in 23S rRNA and position 2 of adenine 37 in tRNAs. m2A2503 modification seems to play a crucial role in the proofreading step occurring at the peptidyl transferase center and thus would serve to optimize ribosomal fidelity. The polypeptide is Dual-specificity RNA methyltransferase RlmN (Rhodopseudomonas palustris (strain TIE-1)).